The sequence spans 337 residues: Anthranilate phosphoribosyltransferase (337 aa).

5-phospho-alpha-D-ribose 1-diphosphate-binding positions include G81, 84–85, S89, 91–94, 109–117, and A121; these read GD, NVST, and KHGNRAATS. G81 lines the anthranilate pocket. S93 serves as a coordination point for Mg(2+). N112 serves as a coordination point for anthranilate. Residue R167 participates in anthranilate binding. Positions 226 and 227 each coordinate Mg(2+).

This sequence belongs to the anthranilate phosphoribosyltransferase family. Homodimer. Mg(2+) is required as a cofactor.

The catalysed reaction is N-(5-phospho-beta-D-ribosyl)anthranilate + diphosphate = 5-phospho-alpha-D-ribose 1-diphosphate + anthranilate. The protein operates within amino-acid biosynthesis; L-tryptophan biosynthesis; L-tryptophan from chorismate: step 2/5. Its function is as follows. Catalyzes the transfer of the phosphoribosyl group of 5-phosphorylribose-1-pyrophosphate (PRPP) to anthranilate to yield N-(5'-phosphoribosyl)-anthranilate (PRA). In Methylorubrum populi (strain ATCC BAA-705 / NCIMB 13946 / BJ001) (Methylobacterium populi), this protein is Anthranilate phosphoribosyltransferase.